We begin with the raw amino-acid sequence, 357 residues long: MKGNVLIMAGGTGGHVFPALACAREFQARGYAVHWLGTPRGIENDLVPKAGLPLHLIQVSGLRGKGLKSLVKAPLELLKSLFQALRVIRQLRPVCVLGLGGYVTGPGGLAARLNGVPLVIHEQNAVAGTANRSLAPIARRVCEAFPDTFPASDKRLTTGNPVRGELFLDAHARAPLTGRRVNLLVLGGSLGAEPLNKLLPEALAQVPLEIRPAIRHQAGRQHAEITAERYRTVAVEADVAPFISDMAAAYAWADLVICRAGALTVSELTAAGLPAFLVPLPHAIDDHQTRNAEFLVRSGAGRLLPQKSTGAAELAAQLSEVLMHPETLRSMADQARSLAKPEATRTVVDACLEVARG.

UDP-N-acetyl-alpha-D-glucosamine contacts are provided by residues 12–14, N124, R163, S189, I243, 262–267, and Q288; these read TGG and ALTVSE.

Belongs to the glycosyltransferase 28 family. MurG subfamily.

The protein localises to the cell inner membrane. It carries out the reaction di-trans,octa-cis-undecaprenyl diphospho-N-acetyl-alpha-D-muramoyl-L-alanyl-D-glutamyl-meso-2,6-diaminopimeloyl-D-alanyl-D-alanine + UDP-N-acetyl-alpha-D-glucosamine = di-trans,octa-cis-undecaprenyl diphospho-[N-acetyl-alpha-D-glucosaminyl-(1-&gt;4)]-N-acetyl-alpha-D-muramoyl-L-alanyl-D-glutamyl-meso-2,6-diaminopimeloyl-D-alanyl-D-alanine + UDP + H(+). It participates in cell wall biogenesis; peptidoglycan biosynthesis. Cell wall formation. Catalyzes the transfer of a GlcNAc subunit on undecaprenyl-pyrophosphoryl-MurNAc-pentapeptide (lipid intermediate I) to form undecaprenyl-pyrophosphoryl-MurNAc-(pentapeptide)GlcNAc (lipid intermediate II). This is UDP-N-acetylglucosamine--N-acetylmuramyl-(pentapeptide) pyrophosphoryl-undecaprenol N-acetylglucosamine transferase from Pseudomonas aeruginosa (strain LESB58).